Reading from the N-terminus, the 361-residue chain is Phosphoserine aminotransferase (361 aa).

R43 contributes to the L-glutamate binding site. Pyridoxal 5'-phosphate contacts are provided by residues 77–78 (AS), W103, T153, D172, and Q195. An N6-(pyridoxal phosphate)lysine modification is found at K196. 237-238 (NT) is a pyridoxal 5'-phosphate binding site.

It belongs to the class-V pyridoxal-phosphate-dependent aminotransferase family. SerC subfamily. In terms of assembly, homodimer. Pyridoxal 5'-phosphate serves as cofactor.

The protein localises to the cytoplasm. The catalysed reaction is O-phospho-L-serine + 2-oxoglutarate = 3-phosphooxypyruvate + L-glutamate. The enzyme catalyses 4-(phosphooxy)-L-threonine + 2-oxoglutarate = (R)-3-hydroxy-2-oxo-4-phosphooxybutanoate + L-glutamate. Its pathway is amino-acid biosynthesis; L-serine biosynthesis; L-serine from 3-phospho-D-glycerate: step 2/3. It functions in the pathway cofactor biosynthesis; pyridoxine 5'-phosphate biosynthesis; pyridoxine 5'-phosphate from D-erythrose 4-phosphate: step 3/5. Functionally, catalyzes the reversible conversion of 3-phosphohydroxypyruvate to phosphoserine and of 3-hydroxy-2-oxo-4-phosphonooxybutanoate to phosphohydroxythreonine. This chain is Phosphoserine aminotransferase, found in Desulfotalea psychrophila (strain LSv54 / DSM 12343).